The following is a 200-amino-acid chain: MPIEFIATSKLPTAFGEFNISVFQDPVTGEEHVALSKGLENPPTGPVLVRVHSECLTGDAFASLKCDCGPQLQATQKLINEAGQGVILYLRQEGRGIGLTNKIRAYALQDQGHDTVDANLLLNLPADARRYDMCSIMLDHLKVKEVKLITNNPLKIQALKDQGINVVDRVPLTVGRNPFNEHYLKTKRERMDHLYQKDDF.

50–54 (RVHSE) contacts GTP. Residues C55, C66, and C68 each coordinate Zn(2+). Residues Q71, 93–95 (EGR), and T115 contribute to the GTP site. D127 (proton acceptor) is an active-site residue. R129 serves as the catalytic Nucleophile. Residues T150 and K155 each coordinate GTP.

The protein belongs to the GTP cyclohydrolase II family. Zn(2+) is required as a cofactor.

It catalyses the reaction GTP + 4 H2O = 2,5-diamino-6-hydroxy-4-(5-phosphoribosylamino)-pyrimidine + formate + 2 phosphate + 3 H(+). The protein operates within cofactor biosynthesis; riboflavin biosynthesis; 5-amino-6-(D-ribitylamino)uracil from GTP: step 1/4. Functionally, catalyzes the conversion of GTP to 2,5-diamino-6-ribosylamino-4(3H)-pyrimidinone 5'-phosphate (DARP), formate and pyrophosphate. The protein is GTP cyclohydrolase-2 of Acinetobacter baumannii (strain AB0057).